The sequence spans 303 residues: MYYGFDIGGTKIALGVFDSGRQLQWEKRVPTPRDSYDAFLDAVCELVAEADRRFGCKGSVGIGIPGMPETEDGTLYAANVPAASGKPLRADLSARLDRDVRLDNDANCFALSEAWDDEFTQYSLVMGLILGTGVGGGLIFNGKPITGKSYITGEFGHMRLPVDALTMMGLDFPLRRCGCGQHGCIENYLSGRGFAWLYQHYYHQPLQAPEIIAFYDQGDEQARAHVERYLDLLAVCLGNILTIVDPDLVVIGGGLSNFPAITTQLAERLPRHLLPVARVPRIERARHGDAGGMRGAAFLHLTD.

Residues 4–11 and 133–140 contribute to the ATP site; these read GFDIGGTK and GVGGGLIF. Residues histidine 157, cysteine 177, cysteine 179, and cysteine 184 each coordinate Zn(2+).

It belongs to the ROK (NagC/XylR) family. NagK subfamily.

It catalyses the reaction N-acetyl-D-glucosamine + ATP = N-acetyl-D-glucosamine 6-phosphate + ADP + H(+). It participates in cell wall biogenesis; peptidoglycan recycling. Functionally, catalyzes the phosphorylation of N-acetyl-D-glucosamine (GlcNAc) derived from cell-wall degradation, yielding GlcNAc-6-P. This Escherichia coli O127:H6 (strain E2348/69 / EPEC) protein is N-acetyl-D-glucosamine kinase.